A 740-amino-acid polypeptide reads, in one-letter code: Ion-translocating oxidoreductase complex subunit C (740 aa).

2 consecutive 4Fe-4S ferredoxin-type domains span residues 369-397 and 407-436; these read GEPQ…QQLY and KATT…VQYF. The [4Fe-4S] cluster site is built by Cys-377, Cys-380, Cys-383, Cys-387, Cys-416, Cys-419, Cys-422, and Cys-426. The disordered stretch occupies residues 602–684; it reads KLEQQQANAE…EPEEQVDPRK (83 aa). Low complexity-rich tracts occupy residues 605–615 and 637–647; these read QQQANAEPEQQ.

The protein belongs to the 4Fe4S bacterial-type ferredoxin family. RnfC subfamily. In terms of assembly, the complex is composed of six subunits: RsxA, RsxB, RsxC, RsxD, RsxE and RsxG. Requires [4Fe-4S] cluster as cofactor.

It localises to the cell inner membrane. Part of a membrane-bound complex that couples electron transfer with translocation of ions across the membrane. Required to maintain the reduced state of SoxR. The sequence is that of Ion-translocating oxidoreductase complex subunit C from Escherichia coli O7:K1 (strain IAI39 / ExPEC).